A 314-amino-acid polypeptide reads, in one-letter code: DNA-directed RNA polymerase subunit alpha (314 aa).

Positions 1–227 are alpha N-terminal domain (alpha-NTD); the sequence is MLEIEKPKIE…DYLKLFVALT (227 aa). The tract at residues 244-314 is alpha C-terminal domain (alpha-CTD); the sequence is QDKILEMTIE…LGLSLRKSED (71 aa).

The protein belongs to the RNA polymerase alpha chain family. As to quaternary structure, homodimer. The RNAP catalytic core consists of 2 alpha, 1 beta, 1 beta' and 1 omega subunit. When a sigma factor is associated with the core the holoenzyme is formed, which can initiate transcription.

It carries out the reaction RNA(n) + a ribonucleoside 5'-triphosphate = RNA(n+1) + diphosphate. Its function is as follows. DNA-dependent RNA polymerase catalyzes the transcription of DNA into RNA using the four ribonucleoside triphosphates as substrates. This is DNA-directed RNA polymerase subunit alpha from Heliobacterium modesticaldum (strain ATCC 51547 / Ice1).